Reading from the N-terminus, the 182-residue chain is UPF0397 protein BA_2640/GBAA_2640/BAS2460 (182 aa).

A run of 5 helical transmembrane segments spans residues 9–29 (VVAI…GFSI), 40–60 (AILT…IGLI), 71–91 (WSIW…MGFI), 114–134 (ITGL…DIIV), and 142–162 (IVIQ…VLGL).

Belongs to the UPF0397 family.

It localises to the cell membrane. The sequence is that of UPF0397 protein BA_2640/GBAA_2640/BAS2460 from Bacillus anthracis.